The primary structure comprises 381 residues: Protein YkfC (381 aa).

In terms of domain architecture, Reverse transcriptase spans 72 to 337; sequence LRDELLSGHY…DGFIFLGHRL (266 aa). Mg(2+) contacts are provided by D166, D284, and D285.

This sequence belongs to the bacterial reverse transcriptase family.

The protein is Protein YkfC (ykfC) of Escherichia coli (strain K12).